Here is a 407-residue protein sequence, read N- to C-terminus: Substance-P receptor (407 aa).

The Extracellular portion of the chain corresponds to 1–31 (MDNVLPGDSDLFPNISTNSSESNQFVQPAWQ). Asn14 and Asn18 each carry an N-linked (GlcNAc...) asparagine glycan. Residues 32–54 (IVLWAAAYTVIVVTSVVGNVVVM) form a helical membrane-spanning segment. The Cytoplasmic portion of the chain corresponds to 55 to 64 (WIILAHKRMR). A helical membrane pass occupies residues 65-86 (TVTNYFLVNLAFAEASMAAFNT). The Extracellular segment spans residues 87 to 106 (VVNFTYAVHNEWYYGLFYCK). An N-linked (GlcNAc...) asparagine glycan is attached at Asn89. Residues Cys105 and Cys180 are joined by a disulfide bond. Residues 107–128 (FHNFFPIAAVFASIYSMTAVAF) traverse the membrane as a helical segment. The Cytoplasmic portion of the chain corresponds to 129–148 (DRYMAIIHPLQPRLSATATK). The chain crosses the membrane as a helical span at residues 149-169 (VVIFVIWVLALLLAFPQGYYS). At 170–194 (TTETMPGRVVCMIEWPEHPNRTYEK) the chain is on the extracellular side. A glycan (N-linked (GlcNAc...) asparagine) is linked at Asn189. Residues 195–219 (AYHICVTVLIYFLPLLVIGYAYTVV) form a helical membrane-spanning segment. The Cytoplasmic segment spans residues 220 to 248 (GITLWASEIPGDSSDRYHEQVSAKRKVVK). A helical transmembrane segment spans residues 249 to 270 (MMIVVVCTFAICWLPFHVFFLL). At 271 to 283 (PYINPDLYVKKFI) the chain is on the extracellular side. A helical transmembrane segment spans residues 284 to 308 (QQVYLAIMWLAMSSTMYNPIIYCCL). Residues 309–407 (NDRFRLGFKH…SSSFYSNMLA (99 aa)) lie on the Cytoplasmic side of the membrane. The S-palmitoyl cysteine moiety is linked to residue Cys322. A disordered region spans residues 365–407 (HEDEAEEGPKATPSSLDLTSNGSSRSNSKTMTESSSFYSNMLA). Over residues 376–407 (TPSSLDLTSNGSSRSNSKTMTESSSFYSNMLA) the composition is skewed to polar residues.

The protein belongs to the G-protein coupled receptor 1 family. Interacts with ARRB1.

It localises to the cell membrane. Its function is as follows. This is a receptor for the tachykinin neuropeptide substance P. It is probably associated with G proteins that activate a phosphatidylinositol-calcium second messenger system. The protein is Substance-P receptor (TACR1) of Meriones unguiculatus (Mongolian jird).